We begin with the raw amino-acid sequence, 547 residues long: Chaperonin GroEL (547 aa).

ATP is bound by residues 30-33, K51, 87-91, G415, 479-481, and D495; these read TLGP, DGTTT, and NAA. The tract at residues 526–547 is disordered; sequence KEEKSDLSVPPQGGMGGMGGMM. The span at 538–547 shows a compositional bias: gly residues; that stretch reads GGMGGMGGMM.

It belongs to the chaperonin (HSP60) family. In terms of assembly, forms a cylinder of 14 subunits composed of two heptameric rings stacked back-to-back. Interacts with the co-chaperonin GroES.

Its subcellular location is the cytoplasm. The enzyme catalyses ATP + H2O + a folded polypeptide = ADP + phosphate + an unfolded polypeptide.. Functionally, together with its co-chaperonin GroES, plays an essential role in assisting protein folding. The GroEL-GroES system forms a nano-cage that allows encapsulation of the non-native substrate proteins and provides a physical environment optimized to promote and accelerate protein folding. This chain is Chaperonin GroEL, found in Buchnera aphidicola subsp. Tetraneura caerulescens.